A 517-amino-acid chain; its full sequence is Synaptic vesicular amine transporter (517 aa).

At 1-20 (MALSELALLRRLQESRHSRK) the chain is on the cytoplasmic side. A helical membrane pass occupies residues 21–41 (LILFIVFLALLLDNMLLTVVV). Residues 42 to 132 (PIIPSYLYSI…EDKDLLNENV (91 aa)) are Extracellular-facing. N-linked (GlcNAc...) asparagine glycans are attached at residues asparagine 84, asparagine 91, and asparagine 112. A disulfide bridge connects residues cysteine 120 and cysteine 327. A helical transmembrane segment spans residues 133 to 153 (QVGLLFASKATVQLLTNPFIG). The Cytoplasmic segment spans residues 154–162 (LLTNRIGYP). The chain crosses the membrane as a helical span at residues 163–183 (IPMFTGFCIMFISTVMFAFSR). Topologically, residues 184–192 (TYAFLLIAR) are extracellular. A helical transmembrane segment spans residues 193–213 (SLQGIGSSCSSVAGMGMLASV). Over 214 to 222 (YTDDEERGN) the chain is Cytoplasmic. The chain crosses the membrane as a helical span at residues 223-245 (AMGIALGGLAMGVLVGPPFGSVL). 2 residues coordinate serotonin: leucine 231 and valine 235. At 246 to 251 (YEFVGK) the chain is on the extracellular side. Residues 252–274 (TAPFLVLAALVLLDGAIQLFVLQ) form a helical membrane-spanning segment. The Cytoplasmic portion of the chain corresponds to 275–294 (PSRVQPESQKGTPLTTLLRD). The helical transmembrane segment at 295-314 (PYILIAAGSICFANMGIAML) threads the bilayer. Asparagine 308, isoleucine 311, glutamate 315, phenylalanine 337, and tyrosine 344 together coordinate serotonin. The Extracellular segment spans residues 315-331 (EPALPIWMMETMCSHKW). Residues 332–355 (QLGVAFLPASVSYLIGTNVFGILA) form a helical membrane-spanning segment. The Cytoplasmic segment spans residues 356–360 (HKMGR). A helical membrane pass occupies residues 361–381 (WLCALLGMIIVGMSILCIPLA). The Extracellular portion of the chain corresponds to 382–392 (KNIYGLIAPNF). Residues 393–413 (GVGFAIGMVDSSMMPIMGYLV) traverse the membrane as a helical segment. Aspartate 402 contacts serotonin. At 414-417 (DLRH) the chain is on the cytoplasmic side. The chain crosses the membrane as a helical span at residues 418–438 (VSVYGSVYAIADVAFCMGYAI). Tyrosine 436 provides a ligand contact to serotonin. Residues 439-443 (GPSAG) lie on the Extracellular side of the membrane. The chain crosses the membrane as a helical span at residues 444–465 (GAIAKAIGFPWLMTIIGIIDIL). Topologically, residues 466–517 (FAPLCFFLRSPPAKEEKMAILMDHNCPIKTKMYTQNSSQSHPIGEDEESESD) are cytoplasmic. Residues serine 514 and serine 516 each carry the phosphoserine; by CK2 modification.

Belongs to the major facilitator superfamily. Vesicular transporter family. As to quaternary structure, interacts with SLC6A3.

The protein resides in the cytoplasmic vesicle. It localises to the secretory vesicle. Its subcellular location is the synaptic vesicle membrane. The protein localises to the secretory vesicle membrane. It is found in the cell projection. The protein resides in the axon. It localises to the dendrite. The enzyme catalyses serotonin(in) + 2 H(+)(out) = serotonin(out) + 2 H(+)(in). It carries out the reaction dopamine(in) + 2 H(+)(out) = dopamine(out) + 2 H(+)(in). The catalysed reaction is histamine(in) + 2 H(+)(out) = histamine(out) + 2 H(+)(in). Strongly inhibited by reserpine and tetrabenazine. Also inhibited to a lesser extent by ketanserin and fenfluramine. Reserpine and ketanserin inhibit by blocking the substrate-binding pocket. Tetrabenazine traps SLC18A2/VMAT2 in an occluded conformation and its inhibition is specific to SLC18A2/VMAT2 but not SLC18A1/VMAT1. Functionally, electrogenic antiporter that exchanges one cationic monoamine with two intravesicular protons across the membrane of secretory and synaptic vesicles. Uses the electrochemical proton gradient established by the V-type proton-pump ATPase to accumulate high concentrations of monoamines inside the vesicles prior to their release via exocytosis. Transports a variety of catecholamines such as dopamine, adrenaline and noradrenaline, histamine, and indolamines such as serotonin. Regulates the transvesicular monoaminergic gradient that determines the quantal size. Mediates somatodendritic dopamine release in hippocampal neurons, likely as part of a regulated secretory pathway that integrates retrograde synaptic signals. Acts as a primary transporter for striatal dopamine loading ensuring impulse-dependent release of dopamine at the synaptic cleft. Responsible for histamine and serotonin storage and subsequent corelease from mast cell granules. The polypeptide is Synaptic vesicular amine transporter (SLC18A2) (Bos taurus (Bovine)).